Reading from the N-terminus, the 548-residue chain is Peptide chain release factor 3 (548 aa).

Positions 23 to 290 constitute a tr-type G domain; it reads ERRRTFGIIS…ALLDWAPPPQ (268 aa). GTP is bound by residues 32–39, 100–104, and 154–157; these read SHPDAGKT, DTPGH, and NKMD.

The protein belongs to the TRAFAC class translation factor GTPase superfamily. Classic translation factor GTPase family. PrfC subfamily.

The protein resides in the cytoplasm. Functionally, increases the formation of ribosomal termination complexes and stimulates activities of RF-1 and RF-2. It binds guanine nucleotides and has strong preference for UGA stop codons. It may interact directly with the ribosome. The stimulation of RF-1 and RF-2 is significantly reduced by GTP and GDP, but not by GMP. The protein is Peptide chain release factor 3 of Aromatoleum aromaticum (strain DSM 19018 / LMG 30748 / EbN1) (Azoarcus sp. (strain EbN1)).